The chain runs to 227 residues: Cytochrome c oxidase subunit 2 (227 aa).

Topologically, residues 1 to 14 are mitochondrial intermembrane; sequence MAYPFQLGFQDATS. The chain crosses the membrane as a helical span at residues 15-45; it reads PIMEELLHFHDHTLMIVFLISSLVLYIISSM. Residues 46-59 are Mitochondrial matrix-facing; that stretch reads LTTKLTHTSTMDAQ. Residues 60–87 traverse the membrane as a helical segment; the sequence is EVETIWTILPAIILILIALPSLRILYMM. At 88–227 the chain is on the mitochondrial intermembrane side; that stretch reads DEINNPSLTV…YFEEWSASML (140 aa). 6 residues coordinate Cu cation: histidine 161, cysteine 196, glutamate 198, cysteine 200, histidine 204, and methionine 207. Position 198 (glutamate 198) interacts with Mg(2+).

This sequence belongs to the cytochrome c oxidase subunit 2 family. Component of the cytochrome c oxidase (complex IV, CIV), a multisubunit enzyme composed of 14 subunits. The complex is composed of a catalytic core of 3 subunits MT-CO1, MT-CO2 and MT-CO3, encoded in the mitochondrial DNA, and 11 supernumerary subunits COX4I, COX5A, COX5B, COX6A, COX6B, COX6C, COX7A, COX7B, COX7C, COX8 and NDUFA4, which are encoded in the nuclear genome. The complex exists as a monomer or a dimer and forms supercomplexes (SCs) in the inner mitochondrial membrane with NADH-ubiquinone oxidoreductase (complex I, CI) and ubiquinol-cytochrome c oxidoreductase (cytochrome b-c1 complex, complex III, CIII), resulting in different assemblies (supercomplex SCI(1)III(2)IV(1) and megacomplex MCI(2)III(2)IV(2)). Found in a complex with TMEM177, COA6, COX18, COX20, SCO1 and SCO2. Interacts with TMEM177 in a COX20-dependent manner. Interacts with COX20. Interacts with COX16. Cu cation is required as a cofactor.

It localises to the mitochondrion inner membrane. The catalysed reaction is 4 Fe(II)-[cytochrome c] + O2 + 8 H(+)(in) = 4 Fe(III)-[cytochrome c] + 2 H2O + 4 H(+)(out). Its function is as follows. Component of the cytochrome c oxidase, the last enzyme in the mitochondrial electron transport chain which drives oxidative phosphorylation. The respiratory chain contains 3 multisubunit complexes succinate dehydrogenase (complex II, CII), ubiquinol-cytochrome c oxidoreductase (cytochrome b-c1 complex, complex III, CIII) and cytochrome c oxidase (complex IV, CIV), that cooperate to transfer electrons derived from NADH and succinate to molecular oxygen, creating an electrochemical gradient over the inner membrane that drives transmembrane transport and the ATP synthase. Cytochrome c oxidase is the component of the respiratory chain that catalyzes the reduction of oxygen to water. Electrons originating from reduced cytochrome c in the intermembrane space (IMS) are transferred via the dinuclear copper A center (CU(A)) of subunit 2 and heme A of subunit 1 to the active site in subunit 1, a binuclear center (BNC) formed by heme A3 and copper B (CU(B)). The BNC reduces molecular oxygen to 2 water molecules using 4 electrons from cytochrome c in the IMS and 4 protons from the mitochondrial matrix. The chain is Cytochrome c oxidase subunit 2 (MT-CO2) from Equus asinus (Donkey).